We begin with the raw amino-acid sequence, 699 residues long: Elongation factor G (699 aa).

A tr-type G domain is found at 8-288; sequence EDYRNFGIMA…AVVDYLPSPI (281 aa). Residues 17–24, 86–90, and 140–143 each bind GTP; these read AHIDAGKT, DTPGH, and NKMD.

Belongs to the TRAFAC class translation factor GTPase superfamily. Classic translation factor GTPase family. EF-G/EF-2 subfamily.

The protein localises to the cytoplasm. Catalyzes the GTP-dependent ribosomal translocation step during translation elongation. During this step, the ribosome changes from the pre-translocational (PRE) to the post-translocational (POST) state as the newly formed A-site-bound peptidyl-tRNA and P-site-bound deacylated tRNA move to the P and E sites, respectively. Catalyzes the coordinated movement of the two tRNA molecules, the mRNA and conformational changes in the ribosome. This is Elongation factor G from Rhizobium meliloti (strain 1021) (Ensifer meliloti).